A 431-amino-acid chain; its full sequence is Glutamate-1-semialdehyde 2,1-aminomutase (431 aa).

K267 bears the N6-(pyridoxal phosphate)lysine mark.

The protein belongs to the class-III pyridoxal-phosphate-dependent aminotransferase family. HemL subfamily. As to quaternary structure, homodimer. Requires pyridoxal 5'-phosphate as cofactor.

It is found in the cytoplasm. It catalyses the reaction (S)-4-amino-5-oxopentanoate = 5-aminolevulinate. Its pathway is porphyrin-containing compound metabolism; protoporphyrin-IX biosynthesis; 5-aminolevulinate from L-glutamyl-tRNA(Glu): step 2/2. In Myxococcus xanthus (strain DK1622), this protein is Glutamate-1-semialdehyde 2,1-aminomutase.